We begin with the raw amino-acid sequence, 240 residues long: uncharacterized protein (240 aa).

The disordered stretch occupies residues 216–240 (MKQSKNKPRIRQAVGATRQCRKPQA).

This is an uncharacterized protein from Escherichia coli (strain K12).